The chain runs to 186 residues: MKLIVGLGNPGREYELTRHNIGFMAIDELAKRWNISLNEQKFKGLFGAGFVNGEKVILLKPLTYMNLSGESIRPLMDYYKIDVEDFVVLYDDLDIPVGKLRLRMKGSAGGHNGVKSTISHLGTQEFQRIRMGIDRPKNGMKVVDYVLGRFTSEEIPDVNHSIEKAADACEEWLNKPFLQIMNTFNS.

Tyr14 serves as a coordination point for tRNA. His19 functions as the Proton acceptor in the catalytic mechanism. TRNA contacts are provided by Tyr64, Asn66, and Asn112.

The protein belongs to the PTH family. Monomer.

The protein resides in the cytoplasm. The catalysed reaction is an N-acyl-L-alpha-aminoacyl-tRNA + H2O = an N-acyl-L-amino acid + a tRNA + H(+). In terms of biological role, hydrolyzes ribosome-free peptidyl-tRNAs (with 1 or more amino acids incorporated), which drop off the ribosome during protein synthesis, or as a result of ribosome stalling. Catalyzes the release of premature peptidyl moieties from peptidyl-tRNA molecules trapped in stalled 50S ribosomal subunits, and thus maintains levels of free tRNAs and 50S ribosomes. The polypeptide is Peptidyl-tRNA hydrolase (Bacillus anthracis).